A 332-amino-acid chain; its full sequence is MQLIKALKGHTDRAWAASVHPNLPLLATCSGDKTVRIYNTNNWELVTTITEGHNRSVRSVAWKPSGSSPSLALGSFDSTVSIWGKEDDEWQFLAAIEGHENEVKGVSWSCDGQLLATCSRDKSIWVWEADDMNDEFECISVLQDHTQDVKHVAWHPSEMVFASASYDDTVRLWREDDDDWICVADLGGHESTVWGCAFEPSEGSDLRLVSCSDDKTCIVWKKEGQVGGTGDHSGIRPAFRADPLSEEWIQQATLPEAHTRAIYSVAWNKNGRIASTGADGKLVVYKENGPGQWVVESEVENAHGVYEVNDVVWLDDKLVTSGDDGVVNIWEV.

WD repeat units follow at residues 9–48, 52–93, 98–137, 144–183, 188–230, 257–295, and 302–332; these read GHTD…LVTT, GHNR…WQFL, GHEN…DEFE, DHTQ…WICV, GHES…GGTG, AHTR…QWVV, and AHGV…IWEV.

Belongs to the WD repeat CIA1 family. Interacts with NAR1.

It is found in the cytoplasm. The protein localises to the nucleus. In terms of biological role, essential component of the cytosolic iron-sulfur (Fe/S) protein assembly machinery. Required for the maturation of extramitochondrial Fe/S proteins. The protein is Probable cytosolic iron-sulfur protein assembly protein 1 of Yarrowia lipolytica (strain CLIB 122 / E 150) (Yeast).